Reading from the N-terminus, the 432-residue chain is MKFTLSTVTKCSGRLGVLGGLDRLPNLSLQTPAFIFHTKGGSIPHLSKEAMQHVSGDPSCFLHLSISNTLHMQEAIKASRITIAEFIAQSNCATLLFVRDPSEPPIPGLPEKDSLPIYTRNGRRNITLEQYMTLVETFRPDAYVPLYDGDTDASSSKKRDQKSLDRTEKFVEQCLEWHRKSDALQSSCLIGPVVGGYNEKLREQSVAFLRQSDDAFAGYLIEGLHMHGPSVARMDGSAALGIVANVCKQLPEAKVRLCFGSYDPALVLEMVAAGVDVFDTSYVYLKAAQEHRALVFSFDVTSTEQEHVTELDTTDARWAEDFGPLLPGCKCYTCQKHSRAYVHHLHNTREMLGPILLMMHNLHHYVEFFKAIRHHVANDSLPELRNHLAGQKSLPPYEPPKEEKLPMPAAQKAELMEPMEDLGEKQNKKQRA.

The Zn(2+) site is built by cysteine 329, cysteine 331, cysteine 334, and histidine 360. The disordered stretch occupies residues 390–432; that stretch reads GQKSLPPYEPPKEEKLPMPAAQKAELMEPMEDLGEKQNKKQRA. The segment covering 422–432 has biased composition (basic and acidic residues); it reads LGEKQNKKQRA.

The protein belongs to the queuine tRNA-ribosyltransferase family. QTRT2 subfamily. As to quaternary structure, heterodimer of a catalytic subunit and an accessory subunit. The cofactor is Zn(2+).

Its subcellular location is the cytoplasm. Non-catalytic subunit of the queuine tRNA-ribosyltransferase (TGT) that catalyzes the base-exchange of a guanine (G) residue with queuine (Q) at position 34 (anticodon wobble position) in tRNAs with GU(N) anticodons (tRNA-Asp, -Asn, -His and -Tyr), resulting in the hypermodified nucleoside queuosine (7-(((4,5-cis-dihydroxy-2-cyclopenten-1-yl)amino)methyl)-7-deazaguanosine). The chain is Queuine tRNA-ribosyltransferase accessory subunit 2 from Anopheles gambiae (African malaria mosquito).